The chain runs to 367 residues: Heme A synthase (367 aa).

The next 5 helical transmembrane spans lie at 25–45 (AIRI…LVGG), 111–131 (FLAR…VLTG), 137–157 (LWLP…IGWW), 174–194 (LATH…FMRA), and 211–231 (LAGL…LVAG). Histidine 274 is a heme binding site. 3 helical membrane-spanning segments follow: residues 276–296 (LGAY…LRAA), 305–325 (SVVL…TLLL), and 327–347 (VPLH…GFAI). Position 335 (histidine 335) interacts with heme.

It belongs to the COX15/CtaA family. Type 2 subfamily. In terms of assembly, interacts with CtaB. Requires heme b as cofactor.

The protein localises to the cell membrane. The enzyme catalyses Fe(II)-heme o + 2 A + H2O = Fe(II)-heme a + 2 AH2. Its pathway is porphyrin-containing compound metabolism; heme A biosynthesis; heme A from heme O: step 1/1. Its function is as follows. Catalyzes the conversion of heme O to heme A by two successive hydroxylations of the methyl group at C8. The first hydroxylation forms heme I, the second hydroxylation results in an unstable dihydroxymethyl group, which spontaneously dehydrates, resulting in the formyl group of heme A. In Rhizobium rhizogenes (strain K84 / ATCC BAA-868) (Agrobacterium radiobacter), this protein is Heme A synthase.